Consider the following 242-residue polypeptide: uncharacterized protein (242 aa).

The 61-residue stretch at 2 to 62 folds into the S4 RNA-binding domain; that stretch reads EKAYKILSVQ…VEKPSVIFED (61 aa). D93 is a catalytic residue.

The protein belongs to the pseudouridine synthase RluA family.

The enzyme catalyses a uridine in RNA = a pseudouridine in RNA. This is an uncharacterized protein from Helicobacter pylori (strain ATCC 700392 / 26695) (Campylobacter pylori).